The chain runs to 135 residues: Large ribosomal subunit protein uL16m (135 aa).

The protein belongs to the universal ribosomal protein uL16 family.

The protein resides in the mitochondrion. The protein is Large ribosomal subunit protein uL16m (RPL16) of Prototheca wickerhamii.